We begin with the raw amino-acid sequence, 157 residues long: UPF0178 protein BH1374 (157 aa).

This sequence belongs to the UPF0178 family.

The chain is UPF0178 protein BH1374 from Halalkalibacterium halodurans (strain ATCC BAA-125 / DSM 18197 / FERM 7344 / JCM 9153 / C-125) (Bacillus halodurans).